The chain runs to 114 residues: NADH-quinone oxidoreductase subunit K 2 (114 aa).

Transmembrane regions (helical) follow at residues 1 to 21 (MIVP…LGVF), 29 to 49 (LIMI…AFIG), and 62 to 82 (FVLF…AIIV).

This sequence belongs to the complex I subunit 4L family. NDH-1 is composed of 14 different subunits. Subunits NuoA, H, J, K, L, M, N constitute the membrane sector of the complex.

It is found in the cell inner membrane. It catalyses the reaction a quinone + NADH + 5 H(+)(in) = a quinol + NAD(+) + 4 H(+)(out). In terms of biological role, NDH-1 shuttles electrons from NADH, via FMN and iron-sulfur (Fe-S) centers, to quinones in the respiratory chain. The immediate electron acceptor for the enzyme in this species is believed to be ubiquinone. Couples the redox reaction to proton translocation (for every two electrons transferred, four hydrogen ions are translocated across the cytoplasmic membrane), and thus conserves the redox energy in a proton gradient. The chain is NADH-quinone oxidoreductase subunit K 2 from Syntrophobacter fumaroxidans (strain DSM 10017 / MPOB).